The chain runs to 121 residues: Small ribosomal subunit protein uS13 (121 aa).

A disordered region spans residues 97–121 (VRGQRTRTNARTRRGARKTVAGKKK). The span at 100 to 121 (QRTRTNARTRRGARKTVAGKKK) shows a compositional bias: basic residues.

This sequence belongs to the universal ribosomal protein uS13 family. As to quaternary structure, part of the 30S ribosomal subunit. Forms a loose heterodimer with protein S19. Forms two bridges to the 50S subunit in the 70S ribosome.

Its function is as follows. Located at the top of the head of the 30S subunit, it contacts several helices of the 16S rRNA. In the 70S ribosome it contacts the 23S rRNA (bridge B1a) and protein L5 of the 50S subunit (bridge B1b), connecting the 2 subunits; these bridges are implicated in subunit movement. Contacts the tRNAs in the A and P-sites. This chain is Small ribosomal subunit protein uS13, found in Synechococcus sp. (strain CC9605).